The primary structure comprises 283 residues: MAEITASLVKELRERTGAGMMDCKKALTEANGDIELAIENMRKSGAIKAAKKAGNVAADGVIKTKIEGNYGYILEVNCQTDFVAKDGGFQAFADKVLDAAVAGKISDVEVLKAQFEEERVALVAKIGENINIRRIAVLEGDVLGSYQHGARIGVLVAAKGADEELVKQLAMHVAASKPEFVKPEDVSAEVVEKEYQVQLDIAMQSGKPKEIAEKMVEGRMKKFTGEVSLTGQPFVMEPSKSVGQLLKEHNADVTGFIRFEVGEGIEKVETDFAAEVAAMSKQS.

Positions 80-83 (TDFV) are involved in Mg(2+) ion dislocation from EF-Tu.

It belongs to the EF-Ts family.

The protein resides in the cytoplasm. Functionally, associates with the EF-Tu.GDP complex and induces the exchange of GDP to GTP. It remains bound to the aminoacyl-tRNA.EF-Tu.GTP complex up to the GTP hydrolysis stage on the ribosome. In Klebsiella pneumoniae (strain 342), this protein is Elongation factor Ts.